Reading from the N-terminus, the 184-residue chain is Probable cobalt-precorrin-6B C(15)-methyltransferase (decarboxylating) (184 aa).

S-adenosyl-L-methionine-binding positions include threonine 12, 36 to 40 (GCGTG), aspartate 59, and alanine 87.

Belongs to the methyltransferase superfamily. Archaeal-type CbiT family.

The catalysed reaction is Co-precorrin-6B + S-adenosyl-L-methionine = Co-precorrin-7 + S-adenosyl-L-homocysteine + CO2. It participates in cofactor biosynthesis; adenosylcobalamin biosynthesis; cob(II)yrinate a,c-diamide from sirohydrochlorin (anaerobic route): step 8/10. In terms of biological role, catalyzes the methylation of C-15 in cobalt-precorrin-6B followed by the decarboxylation of C-12 to form cobalt-precorrin-7. The chain is Probable cobalt-precorrin-6B C(15)-methyltransferase (decarboxylating) from Methanosarcina mazei (strain ATCC BAA-159 / DSM 3647 / Goe1 / Go1 / JCM 11833 / OCM 88) (Methanosarcina frisia).